The chain runs to 296 residues: Formylmethanofuran--tetrahydromethanopterin formyltransferase-like protein (296 aa).

The protein belongs to the FTR family.

In Methanothermobacter marburgensis (strain ATCC BAA-927 / DSM 2133 / JCM 14651 / NBRC 100331 / OCM 82 / Marburg) (Methanobacterium thermoautotrophicum), this protein is Formylmethanofuran--tetrahydromethanopterin formyltransferase-like protein (ehaS).